We begin with the raw amino-acid sequence, 205 residues long: Isochorismatase domain-containing protein 2 (205 aa).

The protein belongs to the isochorismatase family. In terms of assembly, interacts with CDKN2A.

The protein localises to the cytoplasm. Its subcellular location is the nucleus. The protein is Isochorismatase domain-containing protein 2 (ISOC2) of Macaca fascicularis (Crab-eating macaque).